The sequence spans 465 residues: Poly(A) polymerase I (465 aa).

Active-site residues include Asp80, Asp82, and Asp162. The segment at 430-465 (APPEQKGMLNELDDDPAPRRRRSRPRKRAPRREGTV) is disordered. Over residues 448–459 (RRRRSRPRKRAP) the composition is skewed to basic residues.

Belongs to the tRNA nucleotidyltransferase/poly(A) polymerase family.

The enzyme catalyses RNA(n) + ATP = RNA(n)-3'-adenine ribonucleotide + diphosphate. Functionally, adds poly(A) tail to the 3' end of many RNAs, which usually targets these RNAs for decay. Plays a significant role in the global control of gene expression, through influencing the rate of transcript degradation, and in the general RNA quality control. The chain is Poly(A) polymerase I from Salmonella typhimurium (strain LT2 / SGSC1412 / ATCC 700720).